The primary structure comprises 452 residues: Histone acetyltransferase type B subunit 2 (452 aa).

WD repeat units follow at residues 155–195 (YEDG…NSKE), 205–245 (HHTK…SDGS), 256–296 (HHDA…NKAA), 300–340 (KESR…TPIS), 344–384 (SHCD…DDLS), and 401–441 (GHSS…SNDE).

Belongs to the WD repeat RBAP46/RBAP48/MSI1 family. Component of the HAT-B complex composed of at least HAT1 and HAT2. The HAT-B complex binds to histone H4 tail.

Its subcellular location is the cytoplasm. The protein localises to the nucleus. In terms of biological role, regulatory subunit of the histone acetylase B (HAT-B) complex. The complex acetylates 'Lys-12' of histone H4 which is required for telomeric silencing. The protein is Histone acetyltransferase type B subunit 2 (HAT2) of Yarrowia lipolytica (strain CLIB 122 / E 150) (Yeast).